Here is a 207-residue protein sequence, read N- to C-terminus: Outer-membrane lipoprotein LolB (207 aa).

The first 21 residues, 1 to 21, serve as a signal peptide directing secretion; the sequence is MPQRKISFYRLLPLATLLLAA. C22 is lipidated: N-palmitoyl cysteine. The S-diacylglycerol cysteine moiety is linked to residue C22.

This sequence belongs to the LolB family. As to quaternary structure, monomer.

The protein resides in the cell outer membrane. Its function is as follows. Plays a critical role in the incorporation of lipoproteins in the outer membrane after they are released by the LolA protein. The chain is Outer-membrane lipoprotein LolB from Yersinia enterocolitica serotype O:8 / biotype 1B (strain NCTC 13174 / 8081).